The primary structure comprises 144 residues: RNA-binding protein 1 (144 aa).

Residues 11–84 (CKVYVGNLGS…TRIRVEMSSG (74 aa)) form the RRM domain. The disordered stretch occupies residues 78 to 115 (RVEMSSGRSRDRRRGEGGSSGRSGSGRYRITPSARTTS).

The protein belongs to the splicing factor SR family. Interacts with x16 (via Arg/Ser-rich region). Extensively phosphorylated on serine residues in the RS domain. In terms of processing, the tandem heptapeptide repeats in the C-terminal domain (CTD) can be highly phosphorylated. The phosphorylation activates Pol II. Phosphorylation occurs at residues 'Ser-2', 'Ser-5' and 'Ser-7' of the heptapeptide repeat and is mediated by P-TEFb. Dephosphorylated by the INTAC complex when transcripts are unfavorably configured for transcriptional elongation, leading to premature transcription termination: dephosphorylation is mediated by the mts/PP2A component of the INTAC complex. Ubiquitous.

It is found in the nucleus. Functionally, contributes to the activation of female-specific DSX splicing in vivo by recognizing the RBP1 target sequences within the purine-rich polypyrimidine tract of the female-specific 3' splice site. The sequence is that of RNA-binding protein 1 (Rbp1) from Drosophila melanogaster (Fruit fly).